Here is a 302-residue protein sequence, read N- to C-terminus: Ribostamycin:4-(gamma-L-glutamylamino)-(S)-2-hydroxybutanoyl-[BtrI acyl-carrier protein] 4-(gamma-L-glutamylamino)-(S)-2-hydroxybutanoate transferase (302 aa).

The enzyme catalyses 4-(gamma-L-glutamylamino)-(2S)-2-hydroxybutanoyl-[BtrI ACP] + ribostamycin = gamma-L-glutamyl-butirosin B + holo-[BtrI ACP] + H(+). It participates in antibiotic biosynthesis; butirosin biosynthesis. In terms of biological role, aminoglycoside acyltransferase that attaches the (S)-4-amino-2-hydroxybutyrate (AHBA) side chain from the acyl carrier protein BtrI to the aminoglycoside ribostamycin in the biosynthetic pathway of butirosin. The AHBA side chain protects the antibiotic from several common resistance mechanisms. The chain is Ribostamycin:4-(gamma-L-glutamylamino)-(S)-2-hydroxybutanoyl-[BtrI acyl-carrier protein] 4-(gamma-L-glutamylamino)-(S)-2-hydroxybutanoate transferase (btrH) from Niallia circulans (Bacillus circulans).